A 443-amino-acid polypeptide reads, in one-letter code: ATP-dependent protease ATPase subunit HslU (443 aa).

ATP contacts are provided by residues Ile-18, 60–65, Asp-256, Glu-321, and Arg-393; that span reads GVGKTE.

Belongs to the ClpX chaperone family. HslU subfamily. A double ring-shaped homohexamer of HslV is capped on each side by a ring-shaped HslU homohexamer. The assembly of the HslU/HslV complex is dependent on binding of ATP.

The protein localises to the cytoplasm. In terms of biological role, ATPase subunit of a proteasome-like degradation complex; this subunit has chaperone activity. The binding of ATP and its subsequent hydrolysis by HslU are essential for unfolding of protein substrates subsequently hydrolyzed by HslV. HslU recognizes the N-terminal part of its protein substrates and unfolds these before they are guided to HslV for hydrolysis. The sequence is that of ATP-dependent protease ATPase subunit HslU from Vibrio parahaemolyticus serotype O3:K6 (strain RIMD 2210633).